The following is a 151-amino-acid chain: Caveolin-3 (151 aa).

The Cytoplasmic segment spans residues 1-83 (MMTEEHTDLE…RLLSTLLGVP (83 aa)). Lys38 participates in a covalent cross-link: Glycyl lysine isopeptide (Lys-Gly) (interchain with G-Cter in SUMO3). Residues 84-104 (LALLWGFLFACISFCHIWAVV) constitute an intramembrane region (helical). The Cytoplasmic portion of the chain corresponds to 105-151 (PCIKSYLIEIQCISHIYSLCIRTFCNPLFAALGQVCSNIKVVLRREG).

Belongs to the caveolin family. In terms of assembly, homooligomer. Interacts with DYSF. Interacts with DLG1 and KCNA5; forms a ternary complex. Interacts with DAG1 (via its C-terminal); the interaction prevents binding of DAG1 with DMD. Interacts with TRIM72. Interacts with MUSK; may regulate MUSK signaling. Interacts with POPDC1. Interacts with CAVIN1, CAVIN2 and CAVIN4. Post-translationally, sumoylation with SUMO3 by PIAS4 may reduce agonist-induced internalization and desensitization of adrenergic receptor ABRD2. As to expression, expressed predominantly in muscle.

It localises to the golgi apparatus membrane. Its subcellular location is the cell membrane. The protein resides in the membrane. The protein localises to the caveola. It is found in the sarcolemma. Its function is as follows. May act as a scaffolding protein within caveolar membranes. Interacts directly with G-protein alpha subunits and can functionally regulate their activity. May also regulate voltage-gated potassium channels. Plays a role in the sarcolemma repair mechanism of both skeletal muscle and cardiomyocytes that permits rapid resealing of membranes disrupted by mechanical stress. Mediates the recruitment of CAVIN2 and CAVIN3 proteins to the caveolae. The protein is Caveolin-3 (Cav3) of Rattus norvegicus (Rat).